Consider the following 1078-residue polypeptide: MESAKDTTSTSMFILGKPSGNNMESNEERMQNYHPDPVVEESIKEILEESLKCDVSFESLLFPELEAFDLFIPESSNDIASKNVSYSSNVEEGASDEFKTLVAQSVGNCIQSIGASVKAAMKQEQSNMEDNLINSAGLLTLHRSMLERLVLEQLGQLININLLSSASSQFVSCYAKMLSGKNLDFFNWCEPRFIVFACDKFDGLVKKIASESRDLLMDLKANMNNQFITALKNIFSKAYVALDSGKLNMVATSLLLMAHNKEMSNPEISNKEFCKQVNLLKQELLESRNEIIENHVKNMKMFQEFANKQMNQIFMDNCDKTFLKIHINCKNLITAAKNIGIAVLQSIVLCSNEFSWQYLKPRRHQFKITMMNMITHACECIETIYDDTGLIKPLTSSDIMEGYIAINKNRESSICDLNIDPSESILLELADFDEHGKYSEESSIESIHEDDDNVDYLKYMEVQSPTDNNIPTPSKNNESPTRQKLTNIHEKDVGKMYPDTPSPDVPGKSKEAKTFIEYSRQIGKEQTSPNCVCTASVTDLGGPDNFKSITGLESGKHFLIKKLLETQPDSVVVETGSGQQDILAYSPDKRSQTKEWIQEKGSNSKCTETLPGMTFTNSATPVKSHGAIQDTLNPESKLDKEMEAVESLVNLCDGFHDNPLISEMITFGYETDHSAPYESESDNNDETDYIADCDSTVRTNNIHMNNTNENTPFSKSLYSPPEVTPSKEDHKTEKIVAVSQKCKSKKRTAKRKNVPIKPSKSKKIKLDRLPETTNVIVISSESEDEEDGNNIIDKSMLEKTIKSEPNSESSSESDDCTSEDNYLHLSDYDKVINNGHCQSKGFPSPVFTIPIRSMPGTHDIRNKFVPKKHWLWFMRKTHKVDNCVIHSSAKMNVKNDSDVTEANHCFINHFVPIKTDDEEYEKENVSYTYSKIQDSKTDLEDITPTKKLITEMVMENFMDLTDIIKHGIAKHCQDLSSKYTVITHTACEKNLNVANSQNLVTAETQIFDPQGTGNNSPILNIINDTTCQNDENRCTEGTSNDNEKCTIRSDCNSDKMEVFKLDGYPSDYDPFEENAQIY.

The span at 1–12 (MESAKDTTSTSM) shows a compositional bias: polar residues. 4 disordered regions span residues 1-28 (MESA…SNEE), 464-483 (SPTD…PTRQ), 703-732 (HMNN…DHKT), and 781-818 (ESED…DCTS).

This Homo sapiens (Human) protein is Protein U90 (U90).